A 201-amino-acid chain; its full sequence is Small ribosomal subunit protein uS4c (201 aa).

Positions 15 to 44 (LGALPGLTNKRPRAGSDLRNQSRSGKKSQY) are disordered. One can recognise an S4 RNA-binding domain in the interval 89-149 (MRLDNILFRL…DEQKSRALIQ (61 aa)).

Belongs to the universal ribosomal protein uS4 family. As to quaternary structure, part of the 30S ribosomal subunit. Contacts protein S5. The interaction surface between S4 and S5 is involved in control of translational fidelity.

The protein localises to the plastid. The protein resides in the chloroplast. Functionally, one of the primary rRNA binding proteins, it binds directly to 16S rRNA where it nucleates assembly of the body of the 30S subunit. Its function is as follows. With S5 and S12 plays an important role in translational accuracy. The chain is Small ribosomal subunit protein uS4c (rps4) from Helianthus annuus (Common sunflower).